The primary structure comprises 157 residues: Phosphopantetheine adenylyltransferase (157 aa).

Residue Thr-10 participates in substrate binding. Residues 10–11 (TF) and His-18 contribute to the ATP site. 3 residues coordinate substrate: Lys-42, Leu-74, and Arg-88. Residues 89–91 (GLR), Glu-99, and 124–130 (NAFISSS) contribute to the ATP site.

It belongs to the bacterial CoaD family. As to quaternary structure, homohexamer. Requires Mg(2+) as cofactor.

The protein localises to the cytoplasm. It carries out the reaction (R)-4'-phosphopantetheine + ATP + H(+) = 3'-dephospho-CoA + diphosphate. The protein operates within cofactor biosynthesis; coenzyme A biosynthesis; CoA from (R)-pantothenate: step 4/5. Its function is as follows. Reversibly transfers an adenylyl group from ATP to 4'-phosphopantetheine, yielding dephospho-CoA (dPCoA) and pyrophosphate. This chain is Phosphopantetheine adenylyltransferase, found in Helicobacter pylori (strain J99 / ATCC 700824) (Campylobacter pylori J99).